The primary structure comprises 889 residues: Cytoplasmic aconitate hydratase (889 aa).

Residues Gln-86 and 205–207 (DSH) contribute to the substrate site. Cys-437, Cys-503, and Cys-506 together coordinate [4Fe-4S] cluster. Residues Arg-536, Arg-541, Arg-699, and 779-780 (SR) each bind substrate.

The protein belongs to the aconitase/IPM isomerase family. In terms of assembly, interacts (when associated with the 4Fe-4S) with FBXL5. Interacts with frataxin(81-210). Requires [4Fe-4S] cluster as cofactor.

It localises to the cytoplasm. The protein resides in the cytosol. It catalyses the reaction citrate = D-threo-isocitrate. In terms of biological role, bifunctional iron sensor that switches between 2 activities depending on iron availability. Iron deprivation, promotes its mRNA binding activity through which it regulates the expression of genes involved in iron uptake, sequestration and utilization. Binds to iron-responsive elements (IRES) in the untranslated region of target mRNAs preventing for instance the translation of ferritin and aminolevulinic acid synthase and stabilizing the transferrin receptor mRNA. Functionally, conversely, when cellular iron levels are high, binds a 4Fe-4S cluster which precludes RNA binding activity and promotes the aconitase activity, the isomerization of citrate to isocitrate via cis-aconitate. The sequence is that of Cytoplasmic aconitate hydratase (ACO1) from Oryctolagus cuniculus (Rabbit).